A 461-amino-acid chain; its full sequence is Glucan endo-1,3-beta-glucosidase (461 aa).

The N-terminal stretch at 1-23 (MPLLILLMLLAAGAAGAESATPS) is a signal peptide. Glu-123 (proton donor) is an active-site residue. Glu-265 serves as the catalytic Nucleophile. Positions 350–375 (GASVAPTPSPNPSPNPSPKPAPSGGG) are disordered. Over residues 356–370 (TPSPNPSPNPSPKPA) the composition is skewed to pro residues. Cys-378 and Cys-439 form a disulfide bridge.

The protein belongs to the glycosyl hydrolase 17 family. Contains two additional disulfide bonds.

It catalyses the reaction Hydrolysis of (1-&gt;3)-beta-D-glucosidic linkages in (1-&gt;3)-beta-D-glucans.. Its function is as follows. Is thought to be an important plant defense-related product against fungal pathogens. This is Glucan endo-1,3-beta-glucosidase (GLC1) from Triticum aestivum (Wheat).